The following is an 88-amino-acid chain: Small ribosomal subunit protein bS18A (88 aa).

The protein belongs to the bacterial ribosomal protein bS18 family. Part of the 30S ribosomal subunit. Forms a tight heterodimer with protein bS6.

Its function is as follows. Binds as a heterodimer with protein bS6 to the central domain of the 16S rRNA, where it helps stabilize the platform of the 30S subunit. In Mycolicibacterium gilvum (strain PYR-GCK) (Mycobacterium gilvum (strain PYR-GCK)), this protein is Small ribosomal subunit protein bS18A.